We begin with the raw amino-acid sequence, 132 residues long: Small ribosomal subunit protein uS8c (132 aa).

Belongs to the universal ribosomal protein uS8 family. Part of the 30S ribosomal subunit.

It localises to the plastid. Its subcellular location is the chloroplast. Functionally, one of the primary rRNA binding proteins, it binds directly to 16S rRNA central domain where it helps coordinate assembly of the platform of the 30S subunit. The polypeptide is Small ribosomal subunit protein uS8c (rps8) (Calycanthus floridus var. glaucus (Eastern sweetshrub)).